The sequence spans 338 residues: Glyceraldehyde-3-phosphate dehydrogenase 2 (338 aa).

NAD(+)-binding positions include 12–13 (RI), Asp-34, and Arg-79. D-glyceraldehyde 3-phosphate contacts are provided by residues 150 to 152 (SCT), Thr-181, 210 to 211 (TG), and Arg-233. Cys-151 serves as the catalytic Nucleophile. Asn-315 lines the NAD(+) pocket.

Belongs to the glyceraldehyde-3-phosphate dehydrogenase family. As to quaternary structure, homotetramer.

It localises to the cytoplasm. The enzyme catalyses D-glyceraldehyde 3-phosphate + phosphate + NAD(+) = (2R)-3-phospho-glyceroyl phosphate + NADH + H(+). It participates in carbohydrate degradation; glycolysis; pyruvate from D-glyceraldehyde 3-phosphate: step 1/5. This chain is Glyceraldehyde-3-phosphate dehydrogenase 2 (GPD2), found in Mucor circinelloides f. lusitanicus (Mucor racemosus var. lusitanicus).